Here is a 2599-residue protein sequence, read N- to C-terminus: Non-reducing polyketide synthase azaA (2599 aa).

Residues 95–231 (PNILLSPMVV…AARSISSLQQ (137 aa)) form an N-terminal acylcarrier protein transacylase domain (SAT) region. The Nucleophile; for transacylase activity role is filled by cysteine 132. The active-site Proton donor/acceptor; for transacylase activity is the histidine 250. Positions 372–790 (PNEIAVIGMS…GSNASMVVAQ (419 aa)) constitute a Ketosynthase family 3 (KS3) domain. Active-site for beta-ketoacyl synthase activity residues include cysteine 539, histidine 674, and histidine 713. Positions 902–1193 (FGGQISNYVG…ITSMASRALG (292 aa)) are malonyl-CoA:ACP transacylase (MAT) domain. The segment at 1282 to 1413 (PKTLWSLIEA…GKLAFLSGQD (132 aa)) is N-terminal hotdog fold. The 310-residue stretch at 1282 to 1591 (PKTLWSLIEA…YHKVAKASMS (310 aa)) folds into the PKS/mFAS DH domain. Residues 1310-1589 (LVSGHVIANT…INYHKVAKAS (280 aa)) are product template (PT) domain. Residue histidine 1314 is the Proton acceptor; for dehydratase activity of the active site. Residues 1443 to 1591 (ADDIIQGRNI…YHKVAKASMS (149 aa)) form a C-terminal hotdog fold region. The active-site Proton donor; for dehydratase activity is aspartate 1499. Residues 1601–1652 (EAAPSSSTRAHPTSSSSPRLPGPFVPEDKSQNETQTAGTNAVAKKKSEKSAQ) form a disordered region. A compositionally biased stretch (low complexity) spans 1602 to 1619 (AAPSSSTRAHPTSSSSPR). The 75-residue stretch at 1653-1727 (QNVLDKTRAL…GLVEYVQSAV (75 aa)) folds into the Carrier domain. Serine 1687 carries the O-(pantetheine 4'-phosphoryl)serine modification. Residues 1749 to 1779 (NLAASPSSSSSSTNLTEDSSLDPTETTTNIS) are disordered. Residues 1750–1766 (LAASPSSSSSSTNLTED) show a composition bias toward low complexity. The span at 1769–1779 (LDPTETTTNIS) shows a compositional bias: polar residues. The tract at residues 1952-2140 (DSLLNKLSYR…VGYGQVDWTD (189 aa)) is methyltransferase domain. The segment at 2222–2467 (ITGATGSLGV…LCWTPVNDVA (246 aa)) is NADPH-binding (R) domain.

Requires pantetheine 4'-phosphate as cofactor.

It functions in the pathway secondary metabolite biosynthesis. In terms of biological role, non-reducing polyketide synthase; part of the gene cluster that mediates the biosynthesis of azaphilones, a class of fungal metabolites characterized by a highly oxygenated pyrano-quinone bicyclic core and exhibiting a broad range of bioactivities. In the first step, the non-reducing polyketide synthase azaA forms the hexaketide precursor from successive condensations of five malonyl-CoA units, presumably with a simple acetyl-CoA starter unit. The reactive polyketide chain then undergoes a PT-mediated C2-C7 cyclization to afford the aromatic ring and is eventually released as an aldehyde through the R-domain. The putative ketoreductase azaE is proposed to catalyze the reduction of the terminal ketone resulting in the early culture product FK17-P2a. The monooxygenase azaH was demonstrated to be the only enzyme required to convert FK17-P2a to azanigerone E. AzaH first hydroxylates the benzaldehyde intermediate FK17-P2a at C4, which triggers the formation of the pyran-ring to afford azanigerone E. In parallel, the 2,4-dimethylhexanoyl chain is synthesized by the HR-PKS azaB and is proposed to be transferred to the C4-hydroxyl of azanigerone E by the acyltransferase azaD directly from the ACP domain of azaB. Alternatively, the 2,4-dimethyl-hexanoyl chain may be offloaded from the HR-PKS as a carboxylic acid and converted to an acyl-CoA by azaF. The resulting acyl-CoA molecule could then be taken up as a substrate by AzaD to form azanigerone B. To yield the carboxylic acid substituent in azanigerone A, the hydroxypropyl side chain of azanigerone B would need to undergo a C-C oxidative cleavage catalyzed by cytochrome P450 AzaI. AzaI is proposed to act on a vicinal diol that leads to a C-C bond scission either through an alkoxyradical intermediate or a peroxy complex. In the biosynthesis of azanigerone A, azanigerone B first undergoes hydroxylation at C10, possibly catalyzed by one of the two FAD-dependent monooxygenases encoded in the cluster, azaG or azaL, resulting in the vicinal diol azanigerone C. Oxidative cleavage of azanigerone C by azaI would yield the corresponding aldehyde derivative of azanigerone A. Finally, the dehydrogenase azaJ is proposed to convert the aldehyde functional group into the carboxylic acid, completing the conversion from azanigerone B to azanigerone A. Alternatively, the oxidation of aldehyde to carboxylic acid may be catalyzed by the same P450 enzyme azaI via consecutive oxidation or by endogenous alcohol dehydrogenase. The sequence is that of Non-reducing polyketide synthase azaA from Aspergillus niger (strain ATCC 1015 / CBS 113.46 / FGSC A1144 / LSHB Ac4 / NCTC 3858a / NRRL 328 / USDA 3528.7).